We begin with the raw amino-acid sequence, 378 residues long: D-alanine--D-alanine ligase (378 aa).

An ATP-grasp domain is found at 149–374 (KVLLAAAGIP…YTDLITKLIE (226 aa)). Position 189 to 247 (189 to 247 (EAGLQYPLFVKPSRAGSSFGVTKVEHEGDAAELAAAVYEASRHDWRILVEQGIDAREIE)) interacts with ATP. Asp-328, Glu-341, and Asn-343 together coordinate Mg(2+).

The protein belongs to the D-alanine--D-alanine ligase family. The cofactor is Mg(2+). Mn(2+) is required as a cofactor.

The protein localises to the cytoplasm. The catalysed reaction is 2 D-alanine + ATP = D-alanyl-D-alanine + ADP + phosphate + H(+). It participates in cell wall biogenesis; peptidoglycan biosynthesis. Its function is as follows. Cell wall formation. The sequence is that of D-alanine--D-alanine ligase from Bifidobacterium adolescentis (strain ATCC 15703 / DSM 20083 / NCTC 11814 / E194a).